The following is a 1725-amino-acid chain: Latrophilin Cirl (1725 aa).

The Extracellular portion of the chain corresponds to 1 to 757 (MALNELGNCA…LFTMFDGNMR (757 aa)). The SUEL-type lectin domain maps to 18–107 (ACEGKQLTIE…KYLEAHYQCI (90 aa)). The N-linked (GlcNAc...) asparagine glycan is linked to Asn135. Positions 164–284 (AVQPTHSTPS…SAANNSVNIG (121 aa)) are disordered. 2 stretches are compositionally biased toward low complexity: residues 167-176 (PTHSTPSSST) and 224-236 (SSSS…SAGN). Asn236, Asn278, Asn326, Asn388, Asn645, Asn693, and Asn720 each carry an N-linked (GlcNAc...) asparagine glycan. A compositionally biased stretch (polar residues) spans 259 to 282 (LLTTKSSPNRTPGTTASAANNSVN). Positions 361–390 (DDEYDDDLPAASSTTPQPSNNGGDCVHNSS) are disordered. The span at 371–390 (ASSTTPQPSNNGGDCVHNSS) shows a compositional bias: polar residues. The region spanning 551-744 (RNVVQKVKNI…AILMDVVDEH (194 aa)) is the GAIN-B domain. 2 disulfide bridges follow: Cys699–Cys726 and Cys714–Cys728. The tract at residues 699-744 (CVFWNYIDHAWSANGCSLESTNRTHSVCSCNHLTNFAILMDVVDEH) is GPS. The helical transmembrane segment at 758 to 778 (IFIYISVAICVVFIIIALLTL) threads the bilayer. Residues 779-791 (KLFNGVFVKSART) lie on the Cytoplasmic side of the membrane. A helical transmembrane segment spans residues 792-812 (SIYSSIYICLLAIELLFLLGI). The Extracellular portion of the chain corresponds to 813-818 (EQTETS). A helical transmembrane segment spans residues 819 to 839 (IFCGFITVFLHCAILSGTAWF). The Cytoplasmic portion of the chain corresponds to 840–865 (CYEAFHSYSTLTSDELLLEVDQTPKV). Residues 866-886 (NCYYLLSYGLSLSVVAISLVI) traverse the membrane as a helical segment. The Extracellular portion of the chain corresponds to 887–910 (DPSTYTQNDYCVLMEANALFYSTF). A helical membrane pass occupies residues 911 to 931 (VAPVLIFFVAAITYTFLSWII). Residues 932 to 958 (MRRKSRTALKTKEHTRLANVRFDIRCS) are Cytoplasmic-facing. The chain crosses the membrane as a helical span at residues 959-979 (FVFLLLLSVVWCCAYFYLRGA). Residues 980-986 (KLDEDGA) lie on the Extracellular side of the membrane. A helical transmembrane segment spans residues 987-1007 (PIYGYCFICFNTLLGIYIFVF). The Cytoplasmic portion of the chain corresponds to 1008–1725 (HCIQNEKIRR…VRCYLEPLAK (718 aa)). The segment at 1056 to 1088 (TANQSAGTLSKSKSKLPLGAGDEARDGDAQQQQ) is disordered. Ser1153 bears the Phosphoserine mark. Disordered stretches follow at residues 1236 to 1263 (HNNQ…LHSR), 1309 to 1337 (QQLQ…AEQH), 1472 to 1555 (GGGS…SDER), and 1636 to 1705 (LFGH…QARH). Positions 1237–1246 (NNQHGKKKRG) are enriched in basic residues. Residues Ser1255 and Ser1262 each carry the phosphoserine modification. Residues 1309–1327 (QQLQQQQLRQQRQQQQQQL) show a composition bias toward low complexity. A phosphoserine mark is found at Ser1328 and Ser1329. The span at 1478 to 1496 (GGSVTSRSQQQQQQQLKQK) shows a compositional bias: low complexity. Composition is skewed to acidic residues over residues 1505–1522 (DDDD…DEVT) and 1532–1543 (CDDEDNESDIDD). Positions 1651 to 1666 (QTPAQKRQQLQKLSPQ) are enriched in polar residues. A compositionally biased stretch (low complexity) spans 1667–1683 (STTSSSSHTSHSNPQHA). Positions 1684–1693 (PAHHLQHHHT) are enriched in basic residues. Positions 1694-1705 (QQQQQQQQQARH) are enriched in low complexity.

Belongs to the G-protein coupled receptor 2 family. LN-TM7 subfamily. Forms a heterodimer, consisting of a large extracellular region non-covalently linked to a seven-transmembrane moiety. In terms of processing, proteolytically cleaved into 2 subunits, an extracellular subunit and a seven-transmembrane subunit.

It is found in the cell membrane. In Drosophila mojavensis (Fruit fly), this protein is Latrophilin Cirl.